The primary structure comprises 511 residues: MEKFEGYSEKHKSRQQYFVYPLLFQEYIYAFAHDYGLNGSEPVEIVSCNNKKFSSLLVKRLIIRMYQQNFLDNSVNHPNQDRLLDYKNYFYSEFYSQILSEGFAIVVEIPFSLRELSCPKEKEIPKFQNLRSIHSIFPFLEDKFLHLDYLSHIEIPYPIHLEILVQLLQYRIQDVPSLHLLRFFLNYYSNWNSFITSMKSILFLQKENKRLVKFLYNSYVSEYEFFLLFLRKQSSCLPLASSGTFLERIHFSRKMEHFGIMYPGFSRKTLWFFMDPLMHYVRYQGKAILASKGSFFLKKKWKCYLINFWQYYFFFWTQPRRIHINQLANSCFDFMGYLSSVPKSPLLVRNQMLENSFLIDTRMKKFDTIVPATLLIGYLSKAQFCTGSGHPISKPIWTDLSDWDILDRFGRICRNLFHYHSGSSKKRTLYRLKYILRLSCARTLARKHKSTVRTFMQRLGSAFLEEFFTEEEQVFSLMFTKTTLFSFCGSHTERIWYLDIIRINDLVNPLN.

This sequence belongs to the intron maturase 2 family. MatK subfamily.

The protein resides in the plastid. It localises to the chloroplast. In terms of biological role, usually encoded in the trnK tRNA gene intron. Probably assists in splicing its own and other chloroplast group II introns. The polypeptide is Maturase K (Hordeum secalinum (Meadow barley)).